Reading from the N-terminus, the 243-residue chain is uncharacterized protein (243 aa).

Composition is skewed to basic and acidic residues over residues 1-11 (MSDEGYRELVE) and 167-178 (RNRDPPRPSYLR). Disordered stretches follow at residues 1-26 (MSDEGYRELVESKSAPTTPGPWSPDR) and 146-243 (ELYQ…CWPF). Residues 185-200 (STTTARRPRAMTSTPE) are compositionally biased toward low complexity.

This is an uncharacterized protein from Canis lupus familiaris (Dog).